Here is a 200-residue protein sequence, read N- to C-terminus: MAYTSKLIEEAINEISALPGIGKKTALRLVLFLLKSNPEQTERLATSLHKLRSQIQYCQKCHNISDTTLCSICANPHRDTGLICVVENIQDVIAIENTAQYKGIYHVLGGLISPVEGIGPEQLYIEHLVQRVQQEQPQEIIFALSTTIEGDTTTFYITKKLKEFPVKLSNIARGVAVGSELEYTDEMTLARSIKERILYH.

Residues 58 to 73 (CQKCHNISDTTLCSIC) form a C4-type zinc finger. The 96-residue stretch at 81–176 (GLICVVENIQ…KLSNIARGVA (96 aa)) folds into the Toprim domain.

The protein belongs to the RecR family.

In terms of biological role, may play a role in DNA repair. It seems to be involved in an RecBC-independent recombinational process of DNA repair. It may act with RecF and RecO. The chain is Recombination protein RecR from Amoebophilus asiaticus (strain 5a2).